Reading from the N-terminus, the 261-residue chain is Potassium/proton antiporter CemA (261 aa).

Helical transmembrane passes span 138–158 (IISH…CLIL), 186–206 (ILLV…ELMI), and 221–241 (IISG…KYWI).

The protein belongs to the CemA family.

The protein localises to the plastid. It localises to the chloroplast inner membrane. It carries out the reaction K(+)(in) + H(+)(out) = K(+)(out) + H(+)(in). Its function is as follows. Contributes to K(+)/H(+) antiport activity by supporting proton efflux to control proton extrusion and homeostasis in chloroplasts in a light-dependent manner to modulate photosynthesis. Prevents excessive induction of non-photochemical quenching (NPQ) under continuous-light conditions. Indirectly promotes efficient inorganic carbon uptake into chloroplasts. This chain is Potassium/proton antiporter CemA, found in Cryptomeria japonica (Japanese cedar).